Reading from the N-terminus, the 108-residue chain is Virulence-associated protein I (108 aa).

The HTH cro/C1-type domain maps to 19–74; it reads LREEYLKPMGLSAHALAKALHVSPSRINEIVREQRGITADTALRLVRYFGGDAQSW. The H-T-H motif DNA-binding region spans 30-49; it reads SAHALAKALHVSPSRINEIV.

This sequence belongs to the VapA/VapI family.

This Dichelobacter nodosus (Bacteroides nodosus) protein is Virulence-associated protein I (vapI).